Reading from the N-terminus, the 205-residue chain is High frequency lysogenization protein HflD homolog (205 aa).

This sequence belongs to the HflD family.

It is found in the cytoplasm. It localises to the cell inner membrane. The chain is High frequency lysogenization protein HflD homolog from Shewanella sp. (strain ANA-3).